The chain runs to 61 residues: Probable tautomerase stu1128 (61 aa).

The Proton acceptor; via imino nitrogen role is filled by Pro-2.

Belongs to the 4-oxalocrotonate tautomerase family.

The sequence is that of Probable tautomerase stu1128 from Streptococcus thermophilus (strain ATCC BAA-250 / LMG 18311).